The sequence spans 328 residues: Zinc transporter ZIP13 (328 aa).

Residues 1 to 7 (MPGCPCP) are Lumenal-facing. Residues 8 to 28 (GCGMAGPRLLFLTALALELLG) traverse the membrane as a helical segment. Residues 29–68 (RAGGSQPALRSRGTATACRLDNKESESWGALLSGERLDTW) lie on the Cytoplasmic side of the membrane. The helical transmembrane segment at 69–89 (ICSLLGSLMVGLSGVFPLLVI) threads the bilayer. Over 90–108 (PLEMGTMLRSEAGAWHLKQ) the chain is Lumenal. A helical transmembrane segment spans residues 109-129 (LLSFALGGLLGNVFLHLLPEA). At 130 to 149 (WAYTCSASPGGEGQSLQQQQ) the chain is on the cytoplasmic side. The helical transmembrane segment at 150-170 (QLGLWVIAGILTFLALEKMFL) threads the bilayer. The Lumenal portion of the chain corresponds to 171 to 199 (DSKEEGTSQVSGYLNLLANTIDNFTHGLA). A helical membrane pass occupies residues 200–220 (VAASFLVSKKIGLLTTMAILL). An XEXPHE-motif motif is present at residues 221–226 (HEIPHE). Over 221–242 (HEIPHEVGDFAILLRAGFDRWS) the chain is Cytoplasmic. The chain crosses the membrane as a helical span at residues 243–263 (AAKLQLSTALGGLLGAGFAIC). The Lumenal portion of the chain corresponds to 264-273 (TQSPKGVEET). Residues 274-294 (AAWVLPFTSGGFLYIALVNVL) traverse the membrane as a helical segment. Residues 295-306 (PDLLEEEDPWRS) lie on the Cytoplasmic side of the membrane. Residues 307–327 (LQQLLLLCAGIVVMVLFSLFV) form a helical membrane-spanning segment. Position 328 (D328) is a topological domain, lumenal.

The protein belongs to the ZIP transporter (TC 2.A.5) family. As to quaternary structure, homodimer.

The protein resides in the golgi apparatus membrane. It is found in the cytoplasmic vesicle membrane. Its subcellular location is the endoplasmic reticulum membrane. The enzyme catalyses Zn(2+)(in) = Zn(2+)(out). Functions as a zinc transporter transporting Zn(2+) from the Golgi apparatus to the cytosol and thus influences the zinc level at least in areas of the cytosol. May regulate beige adipocyte differentiation. The sequence is that of Zinc transporter ZIP13 from Pongo abelii (Sumatran orangutan).